A 1210-amino-acid chain; its full sequence is Multimerin-1 (1210 aa).

The signal sequence occupies residues 1–19 (MLGLKFLVLLSILWGRVFR). The segment at 57–102 (ATQNPSTQGPAAAERSSEDDVLLQSTSQPSETSTPPEGRHQTPLEK) is disordered. Residues 80–92 (QSTSQPSETSTPP) are compositionally biased toward low complexity. Asn-133 is a glycosylation site (N-linked (GlcNAc...) asparagine). Residues 143–155 (SRKSDQQEVSTKS) show a composition bias toward polar residues. Positions 143–190 (SRKSDQQEVSTKSAGDMGNRSARETHLRRSDNSRNQRPSYQKPSFETT) are disordered. N-linked (GlcNAc...) asparagine glycosylation is present at Asn-161. A compositionally biased stretch (basic and acidic residues) spans 163 to 176 (SARETHLRRSDNSR). Positions 177–189 (NQRPSYQKPSFET) are enriched in polar residues. Positions 192-267 (GKNWCAHVHT…PGYIGPNCQL (76 aa)) constitute an EMI domain. Cystine bridges form between Cys-196-Cys-257, Cys-222-Cys-230, and Cys-256-Cys-265. O-linked (Fuc) threonine glycosylation is present at Thr-201. O-linked (Fuc) threonine glycosylation occurs at Thr-250. The disordered stretch occupies residues 276–299 (AHSNQAESHTAVDQGRAQQQKQDC). Residues 303-338 (AMIQKLAEQLSQQERKLSLLQKKVDNASLVADDMRN) are a coiled coil. N-linked (GlcNAc...) asparagine glycosylation is found at Asn-328, Asn-415, Asn-491, Asn-525, Asn-560, Asn-602, Asn-712, Asn-765, Asn-810, Asn-822, Asn-903, Asn-915, Asn-963, and Asn-1000. Positions 564 to 690 (LLEMEKESAR…RHNLLRNEVQ (127 aa)) form a coiled coil. A coiled-coil region spans residues 809 to 846 (FNETTSQVNKCQQNMSHLEENMLSVTKTAKEFETRLQG). The 37-residue stretch at 1023-1059 (EHSSCSSFPCQNGGTCISGRSNFICACRHPFMGDTCT) folds into the EGF-like domain. Cystine bridges form between Cys-1027/Cys-1038, Cys-1032/Cys-1047, and Cys-1049/Cys-1058. Residue Thr-1037 is glycosylated (O-linked (Fuc) threonine). One can recognise a C1q domain in the interval 1078–1210 (RYAPMVAFFV…TFSGYLLYRT (133 aa)).

Multimeric. Composed of varying sized, disulfide-linked multimers, the smallest of which is a homotrimer. Proteolysis of the promultimerin in the N-terminal region, leads to the mature p155 form that is stored in platelets. Interacts with factor V/Va. Post-translationally, extensively N-glycosylated. O-fucosylated within the EMI domain (at Thr-201 and Thr-250) by FUT10/POFUT3 and FUT11/POFUT4. O-fucosylation at Thr-201 and Thr-1037 are required for facilitating protein folding and secretion.

The protein localises to the secreted. In terms of biological role, carrier protein for platelet (but not plasma) factor V/Va. Plays a role in the storage and stabilization of factor V in platelets. Upon release following platelet activation, may limit platelet and plasma factor Va-dependent thrombin generation. Ligand for integrin alpha-IIb/beta-3 and integrin alpha-V/beta-3 on activated platelets, and may function as an extracellular matrix or adhesive protein. The chain is Multimerin-1 from Mus musculus (Mouse).